Here is a 591-residue protein sequence, read N- to C-terminus: Aspartate--tRNA(Asp/Asn) ligase (591 aa).

Position 176 (Glu-176) interacts with L-aspartate. Residues 200–203 (QLFK) are aspartate. Residue Arg-222 participates in L-aspartate binding. Residues 222-224 (RDE) and Gln-231 contribute to the ATP site. Residue His-450 coordinates L-aspartate. Glu-484 contributes to the ATP binding site. Arg-491 serves as a coordination point for L-aspartate. ATP is bound at residue 536-539 (GLDR).

It belongs to the class-II aminoacyl-tRNA synthetase family. Type 1 subfamily. Homodimer.

The protein localises to the cytoplasm. It carries out the reaction tRNA(Asx) + L-aspartate + ATP = L-aspartyl-tRNA(Asx) + AMP + diphosphate. In terms of biological role, aspartyl-tRNA synthetase with relaxed tRNA specificity since it is able to aspartylate not only its cognate tRNA(Asp) but also tRNA(Asn). Reaction proceeds in two steps: L-aspartate is first activated by ATP to form Asp-AMP and then transferred to the acceptor end of tRNA(Asp/Asn). The polypeptide is Aspartate--tRNA(Asp/Asn) ligase (Bacillus cereus (strain G9842)).